The primary structure comprises 194 residues: Imidazoleglycerol-phosphate dehydratase (194 aa).

It belongs to the imidazoleglycerol-phosphate dehydratase family.

It localises to the cytoplasm. It catalyses the reaction D-erythro-1-(imidazol-4-yl)glycerol 3-phosphate = 3-(imidazol-4-yl)-2-oxopropyl phosphate + H2O. Its pathway is amino-acid biosynthesis; L-histidine biosynthesis; L-histidine from 5-phospho-alpha-D-ribose 1-diphosphate: step 6/9. The protein is Imidazoleglycerol-phosphate dehydratase of Streptococcus thermophilus (strain ATCC BAA-491 / LMD-9).